The chain runs to 391 residues: Metallophosphoesterase 1 (391 aa).

The chain crosses the membrane as a helical span at residues 25–45 (TVVIISVLLFCEYFIYHLVIF). Asp72, Asp114, Asn152, His244, His298, and His300 together coordinate a divalent metal cation. The helical transmembrane segment at 352–372 (VLATYGAAAVFLVVLILAHLE) threads the bilayer.

It belongs to the metallophosphoesterase superfamily. MPPE1 family. Interacts with GPI-anchor proteins (via the GPI portion). Interacts with TMED10. The cofactor is Mn(2+).

It localises to the endoplasmic reticulum-Golgi intermediate compartment membrane. In terms of biological role, metallophosphoesterase that catalyzes the removal of a side-chain ethanolamine-phosphate (EtNP) from the second mannose of the GPI-anchor protein intermediate. Participates in the glycan remodeling steps of GPI-anchor maturation to allow an efficient transport of GPI-anchor proteins from the endoplasmic reticulum to the Golgi. This chain is Metallophosphoesterase 1, found in Cricetulus griseus (Chinese hamster).